The following is a 309-amino-acid chain: tRNA uridine(34) hydroxylase (309 aa).

The Rhodanese domain occupies 130 to 224; the sequence is SDPDTIVIDT…YLEEVPQEES (95 aa). Cysteine 184 acts as the Cysteine persulfide intermediate in catalysis.

Belongs to the TrhO family.

It carries out the reaction uridine(34) in tRNA + AH2 + O2 = 5-hydroxyuridine(34) in tRNA + A + H2O. Its function is as follows. Catalyzes oxygen-dependent 5-hydroxyuridine (ho5U) modification at position 34 in tRNAs. This is tRNA uridine(34) hydroxylase from Rhizobium etli (strain ATCC 51251 / DSM 11541 / JCM 21823 / NBRC 15573 / CFN 42).